The primary structure comprises 509 residues: Activin receptor type-1 (509 aa).

Residues 1–20 (MVDGVMILPVLMMMAFPSPS) form the signal peptide. Residues 21 to 123 (VEDEKPKVNQ…FPGTQNFHLE (103 aa)) are Extracellular-facing. N-linked (GlcNAc...) asparagine glycosylation occurs at asparagine 102. Residues 124-146 (VGLIILSVVFAVCLLACILGVAL) form a helical membrane-spanning segment. Residues 147 to 509 (RKFKRRNQER…NSLDKLKTDC (363 aa)) lie on the Cytoplasmic side of the membrane. The region spanning 178–207 (STLAELLDHSCTSGSGSGLPFLVQRTVARQ) is the GS domain. The region spanning 208-502 (ITLLECVGKG…KTLTKIDNSL (295 aa)) is the Protein kinase domain. ATP is bound by residues 214-222 (VGKGRYGEV) and lysine 235. Catalysis depends on aspartate 336, which acts as the Proton acceptor. Residue serine 501 is modified to Phosphoserine.

The protein belongs to the protein kinase superfamily. TKL Ser/Thr protein kinase family. TGFB receptor subfamily. As to quaternary structure, interacts with FKBP1A. Interacts with FCHO1. Interacts with CLU. Interacts with type II receptors AMHR2 and ACVR2A. Interacts with BMP7. Interacts with BMP9. Interacts with BMP6 (when glycosylated); the interaction may induce HAMP expression. Interacts with TSC22D1/TSC-22. Requires Mg(2+) as cofactor. The cofactor is Mn(2+). In terms of tissue distribution, highly expressed in bone during developmental stages. Expressed in normal parenchymal cells, endothelial cells, fibroblasts and tumor-derived epithelial cells.

The protein resides in the membrane. It carries out the reaction L-threonyl-[receptor-protein] + ATP = O-phospho-L-threonyl-[receptor-protein] + ADP + H(+). It catalyses the reaction L-seryl-[receptor-protein] + ATP = O-phospho-L-seryl-[receptor-protein] + ADP + H(+). Functionally, bone morphogenetic protein (BMP) type I receptor that is involved in a wide variety of biological processes, including bone, heart, cartilage, nervous, and reproductive system development and regulation. As a type I receptor, forms heterotetrameric receptor complexes with the type II receptors AMHR2, ACVR2A ors ACVR2B. Upon binding of ligands such as BMP7 or BMP9 to the heteromeric complexes, type II receptors transphosphorylate ACVR1 intracellular domain. In turn, ACVR1 kinase domain is activated and subsequently phosphorylates SMAD1/5/8 proteins that transduce the signal. In addition to its role in mediating BMP pathway-specific signaling, suppresses TGFbeta/activin pathway signaling by interfering with the binding of activin to its type II receptor. Besides canonical SMAD signaling, can activate non-canonical pathways such as p38 mitogen-activated protein kinases/MAPKs. May promote the expression of HAMP, potentially via its interaction with BMP6. This is Activin receptor type-1 (Acvr1) from Mus musculus (Mouse).